The primary structure comprises 201 residues: Probable nicotinate-nucleotide adenylyltransferase (201 aa).

The protein belongs to the NadD family.

The enzyme catalyses nicotinate beta-D-ribonucleotide + ATP + H(+) = deamido-NAD(+) + diphosphate. It functions in the pathway cofactor biosynthesis; NAD(+) biosynthesis; deamido-NAD(+) from nicotinate D-ribonucleotide: step 1/1. In terms of biological role, catalyzes the reversible adenylation of nicotinate mononucleotide (NaMN) to nicotinic acid adenine dinucleotide (NaAD). This is Probable nicotinate-nucleotide adenylyltransferase from Neisseria gonorrhoeae (strain ATCC 700825 / FA 1090).